A 315-amino-acid chain; its full sequence is tRNA dimethylallyltransferase (315 aa).

Position 13-20 (13-20 (GPTASGKT)) interacts with ATP. Position 15-20 (15-20 (TASGKT)) interacts with substrate. 3 interaction with substrate tRNA regions span residues 38-41 (DSAL), 162-166 (QRIQR), and 245-250 (RCVGYR).

Belongs to the IPP transferase family. As to quaternary structure, monomer. It depends on Mg(2+) as a cofactor.

It carries out the reaction adenosine(37) in tRNA + dimethylallyl diphosphate = N(6)-dimethylallyladenosine(37) in tRNA + diphosphate. Catalyzes the transfer of a dimethylallyl group onto the adenine at position 37 in tRNAs that read codons beginning with uridine, leading to the formation of N6-(dimethylallyl)adenosine (i(6)A). This Methylobacillus flagellatus (strain ATCC 51484 / DSM 6875 / VKM B-1610 / KT) protein is tRNA dimethylallyltransferase.